The primary structure comprises 204 residues: Large ribosomal subunit protein eL15 (204 aa).

The protein belongs to the eukaryotic ribosomal protein eL15 family.

This chain is Large ribosomal subunit protein eL15 (RpL15), found in Chironomus tentans (Midge).